The primary structure comprises 613 residues: Dihydroxy-acid dehydratase (613 aa).

Asp-81 is a binding site for Mg(2+). [2Fe-2S] cluster is bound at residue Cys-122. Residues Asp-123 and Lys-124 each contribute to the Mg(2+) site. Position 124 is an N6-carboxylysine (Lys-124). Cys-193 is a binding site for [2Fe-2S] cluster. Glu-489 serves as a coordination point for Mg(2+). Ser-515 (proton acceptor) is an active-site residue.

Belongs to the IlvD/Edd family. As to quaternary structure, homodimer. [2Fe-2S] cluster serves as cofactor. Mg(2+) is required as a cofactor.

It carries out the reaction (2R)-2,3-dihydroxy-3-methylbutanoate = 3-methyl-2-oxobutanoate + H2O. It catalyses the reaction (2R,3R)-2,3-dihydroxy-3-methylpentanoate = (S)-3-methyl-2-oxopentanoate + H2O. The protein operates within amino-acid biosynthesis; L-isoleucine biosynthesis; L-isoleucine from 2-oxobutanoate: step 3/4. It participates in amino-acid biosynthesis; L-valine biosynthesis; L-valine from pyruvate: step 3/4. Functionally, functions in the biosynthesis of branched-chain amino acids. Catalyzes the dehydration of (2R,3R)-2,3-dihydroxy-3-methylpentanoate (2,3-dihydroxy-3-methylvalerate) into 2-oxo-3-methylpentanoate (2-oxo-3-methylvalerate) and of (2R)-2,3-dihydroxy-3-methylbutanoate (2,3-dihydroxyisovalerate) into 2-oxo-3-methylbutanoate (2-oxoisovalerate), the penultimate precursor to L-isoleucine and L-valine, respectively. The protein is Dihydroxy-acid dehydratase of Pseudomonas putida (strain W619).